Consider the following 264-residue polypeptide: Small ribosomal subunit protein uS2 (264 aa).

Residues Gly222–Gln246 are disordered.

It belongs to the universal ribosomal protein uS2 family.

In Helicobacter hepaticus (strain ATCC 51449 / 3B1), this protein is Small ribosomal subunit protein uS2.